The chain runs to 141 residues: Large ribosomal subunit protein bL21 (141 aa).

Residues 111–141 (ATAPSRTEAAPESNPEAAPSAAATGIPADEE) are disordered. Low complexity predominate over residues 118-133 (EAAPESNPEAAPSAAA).

It belongs to the bacterial ribosomal protein bL21 family. As to quaternary structure, part of the 50S ribosomal subunit. Contacts protein L20.

Functionally, this protein binds to 23S rRNA in the presence of protein L20. This chain is Large ribosomal subunit protein bL21, found in Synechococcus sp. (strain JA-2-3B'a(2-13)) (Cyanobacteria bacterium Yellowstone B-Prime).